Consider the following 616-residue polypeptide: Polypeptide N-acetylgalactosaminyltransferase 3 (616 aa).

The chain crosses the membrane as a helical; Signal-anchor for type II membrane protein span at residues 13 to 33; sequence FFHWKLWKFSIIVFVFLVFLF. The catalytic subdomain A stretch occupies residues 182–291; the sequence is LPTTSIIIVF…YGWLEPLLAR (110 aa). Mn(2+) contacts are provided by Asp-275, His-277, and His-413. The segment at 354-416 is catalytic subdomain B; that stretch reads PIRTPTFAGG…PCSVVGHVFR (63 aa). Residue Asn-482 is glycosylated (N-linked (GlcNAc...) asparagine). Residues 512-616 enclose the Ricin B-type lectin domain; the sequence is NRMCLDVGEN…FQKWIFGQND (105 aa). A disulfide bridge connects residues Cys-515 and Cys-533. The UDP-N-acetyl-alpha-D-galactosamine site is built by Asp-517, Glu-520, His-534, and Asn-539. Cys-588 and Cys-601 are disulfide-bonded.

The protein belongs to the glycosyltransferase 2 family. GalNAc-T subfamily. It depends on Mn(2+) as a cofactor.

The protein resides in the golgi apparatus. Its subcellular location is the golgi stack membrane. The catalysed reaction is L-seryl-[protein] + UDP-N-acetyl-alpha-D-galactosamine = a 3-O-[N-acetyl-alpha-D-galactosaminyl]-L-seryl-[protein] + UDP + H(+). The enzyme catalyses L-threonyl-[protein] + UDP-N-acetyl-alpha-D-galactosamine = a 3-O-[N-acetyl-alpha-D-galactosaminyl]-L-threonyl-[protein] + UDP + H(+). It participates in protein modification; protein glycosylation. Its function is as follows. Catalyzes the initial reaction in O-linked oligosaccharide biosynthesis, the transfer of an N-acetyl-D-galactosamine residue to a serine or threonine residue on the protein receptor. Glycosylates FGF23. This is Polypeptide N-acetylgalactosaminyltransferase 3 (GALNT3) from Taeniopygia guttata (Zebra finch).